A 399-amino-acid chain; its full sequence is Arginase (399 aa).

Mn(2+) contacts are provided by H193, D216, H218, and D220. Substrate-binding positions include 218 to 222 (HADIN), 229 to 231 (SGN), and D273. Residues D322 and D324 each contribute to the Mn(2+) site. Substrate-binding residues include T336 and E367.

Belongs to the arginase family. Requires Mn(2+) as cofactor.

The protein localises to the cytoplasm. It catalyses the reaction L-arginine + H2O = urea + L-ornithine. It functions in the pathway nitrogen metabolism; urea cycle; L-ornithine and urea from L-arginine: step 1/1. The sequence is that of Arginase (CAR1) from Eremothecium gossypii (strain ATCC 10895 / CBS 109.51 / FGSC 9923 / NRRL Y-1056) (Yeast).